Here is a 685-residue protein sequence, read N- to C-terminus: DNA ligase (685 aa).

Residues 47–51 (DSEYD), 96–97 (SL), and glutamate 125 contribute to the NAD(+) site. Lysine 127 acts as the N6-AMP-lysine intermediate in catalysis. Residues arginine 148, glutamate 185, lysine 304, and lysine 328 each contribute to the NAD(+) site. Positions 422, 425, 440, and 446 each coordinate Zn(2+). The BRCT domain maps to 605–685 (ADAQPLKGQT…ELLALLAANA (81 aa)).

This sequence belongs to the NAD-dependent DNA ligase family. LigA subfamily. Requires Mg(2+) as cofactor. Mn(2+) is required as a cofactor.

It catalyses the reaction NAD(+) + (deoxyribonucleotide)n-3'-hydroxyl + 5'-phospho-(deoxyribonucleotide)m = (deoxyribonucleotide)n+m + AMP + beta-nicotinamide D-nucleotide.. Its function is as follows. DNA ligase that catalyzes the formation of phosphodiester linkages between 5'-phosphoryl and 3'-hydroxyl groups in double-stranded DNA using NAD as a coenzyme and as the energy source for the reaction. It is essential for DNA replication and repair of damaged DNA. This chain is DNA ligase, found in Shewanella baltica (strain OS195).